Here is a 402-residue protein sequence, read N- to C-terminus: Deoxyguanosinetriphosphate triphosphohydrolase-like protein (402 aa).

The disordered stretch occupies residues 20–39 (PAFSRGRLVPEPESPTRTPF). An HD domain is found at 73–217 (RLTHTIEVAQ…AAIADDIAYN (145 aa)).

This sequence belongs to the dGTPase family. Type 2 subfamily.

The chain is Deoxyguanosinetriphosphate triphosphohydrolase-like protein from Brucella ovis (strain ATCC 25840 / 63/290 / NCTC 10512).